The sequence spans 256 residues: UPF0259 membrane protein YPO2199/y2042/YP_1997 (256 aa).

6 helical membrane-spanning segments follow: residues 20–40, 90–110, 118–138, 141–161, 192–212, and 221–241; these read IAAILLLALLTAFITVMLNQT, FSALVGNVLLVGGLLTLIAMV, ALQAIGLSLPILPRLLVLMFI, LVIQLGLTFFIVPGVAIAIAL, LIVPAMMLWIAVKLLLLFLIS, and IATIVLSTLSNLASALLLVYL.

Belongs to the UPF0259 family.

It is found in the cell inner membrane. The polypeptide is UPF0259 membrane protein YPO2199/y2042/YP_1997 (Yersinia pestis).